The following is a 173-amino-acid chain: UPF0398 protein SMU_470 (173 aa).

Belongs to the UPF0398 family.

The sequence is that of UPF0398 protein SMU_470 from Streptococcus mutans serotype c (strain ATCC 700610 / UA159).